We begin with the raw amino-acid sequence, 313 residues long: MILNFIYYFILILMVLLSIAFFTLMERKFLGYCHIRKGPNKTGAMGLLQPISDALKLFSKEMNKMFYMNKFIQIISPLIMILMMMMMWMIFYFSNNALNLNMSIIFFLCISSLASYAILFSGWSSNSKYSLIGSYRGFAQVISYEVSMAMILISLAIIPQSYNFISFLKIQETFPLIFSFLPIFIIWIITVLAELNRVPFDLAEGESELVSGFNIEYGSWLFAIIFMSEYGDIMMISFLTYYLFLGLKNLILFFVLILMTMIIMIRGTYVRMRYDQLMMMAWKMILPQSIIFLFLSYFIFLNINNFICINFCN.

8 consecutive transmembrane segments (helical) span residues 2–22 (ILNF…IAFF), 71–91 (FIQI…WMIF), 103–123 (SIIF…FSGW), 138–158 (FAQV…LAII), 173–193 (TFPL…TVLA), 220–240 (WLFA…SFLT), 243–263 (LFLG…TMII), and 289–309 (SIIF…FICI).

Belongs to the complex I subunit 1 family.

Its subcellular location is the mitochondrion inner membrane. The catalysed reaction is a ubiquinone + NADH + 5 H(+)(in) = a ubiquinol + NAD(+) + 4 H(+)(out). Functionally, core subunit of the mitochondrial membrane respiratory chain NADH dehydrogenase (Complex I) that is believed to belong to the minimal assembly required for catalysis. Complex I functions in the transfer of electrons from NADH to the respiratory chain. The immediate electron acceptor for the enzyme is believed to be ubiquinone. This chain is NADH-ubiquinone oxidoreductase chain 1 (ND1), found in Rhipicephalus sanguineus (Brown dog tick).